Here is a 623-residue protein sequence, read N- to C-terminus: MAPPAARARYIANKADNQILSKKPPKRPGLNGNNKTKEATPAGKKKDKDAKKRNQPTSGGQEKGLPNPIMPSVQTAFKTFVSARLCSAIWAYIADCDETFNYWEPLHYIINGHGLQTWEYSPQFGLRSYTYLLLQGVPGYFYQKLFNPSPILIFYMVRCMLGFGCAVMERYMYKSICQEFGIHIGRLWLIFQLFSVGMFVSSTALLPSSFSMYFGCAALAAWWQQNYCFAIFLTAISALLGWPFAALIGIPLVLEMLLRQRDWKTFVQWTLISGATVAIPMIAIDTSYFGKLTFAPLNIVWYNVFTSHGPNIFGTEPLSYYIINGFLNFNIIWLLALQLPIMLVIDYLIVPAKSKSTLNFPHYISLAPLYLWLLVFFAQPHKEERFLFPIYPLISLCGAITVDVYQRIFFRMKSVVFKIKAGVHYLDHSMFIAILVMVTSTLLGLSRVFALYRNYHAPMDLMLELNQFKATPQYDPDVIYNVCIGKDWHRYPGSFFFPAKNFRLRFLKSEFRGMLPAYYDEGQNATKVVQPYFNDLNQENEHMYFDYDRCDFLVDFDEGKYTALEPNYSKRSKDWSVMKSLPFLIPEKSHKVLRAFYVPFLTDNHIQYGDFNLLKRKTKRNGR.

A run of 8 helical transmembrane segments spans residues L152–M172, L193–W223, F229–L254, F266–I284, F326–L348, F360–A378, I390–F410, and F431–Y452.

This sequence belongs to the glycosyltransferase 22 family.

It is found in the endoplasmic reticulum membrane. The enzyme catalyses an alpha-D-Man-(1-&gt;2)-alpha-D-Man-(1-&gt;2)-alpha-D-Man-(1-&gt;3)-[alpha-D-Man-(1-&gt;3)-alpha-D-Man-(1-&gt;6)]-beta-D-Man-(1-&gt;4)-beta-D-GlcNAc-(1-&gt;4)-alpha-D-GlcNAc-diphospho-di-trans,poly-cis-dolichol + a di-trans,poly-cis-dolichyl beta-D-mannosyl phosphate = an alpha-D-Man-(1-&gt;2)-alpha-D-Man-(1-&gt;2)-alpha-D-Man-(1-&gt;3)-[alpha-D-Man-(1-&gt;2)-alpha-D-Man-(1-&gt;3)-alpha-D-Man-(1-&gt;6)]-beta-D-Man-(1-&gt;4)-beta-D-GlcNAc-(1-&gt;4)-alpha-D-GlcNAc-diphospho-di-trans,poly-cis-dolichol + a di-trans,poly-cis-dolichyl phosphate + H(+). It catalyses the reaction an alpha-D-Man-(1-&gt;2)-alpha-D-Man-(1-&gt;2)-alpha-D-Man-(1-&gt;3)-[alpha-D-Man-(1-&gt;2)-alpha-D-Man-(1-&gt;3)-[alpha-D-Man-(1-&gt;6)]-alpha-D-Man-(1-&gt;6)]-beta-D-Man-(1-&gt;4)-beta-D-GlcNAc-(1-&gt;4)-alpha-D-GlcNAc-diphospho-di-trans,poly-cis-dolichol + a di-trans,poly-cis-dolichyl beta-D-mannosyl phosphate = an alpha-D-Man-(1-&gt;2)-alpha-D-Man-(1-&gt;2)-alpha-D-Man-(1-&gt;3)-[alpha-D-Man-(1-&gt;2)-alpha-D-Man-(1-&gt;3)-[alpha-D-Man-(1-&gt;2)-alpha-D-Man-(1-&gt;6)]-alpha-D-Man-(1-&gt;6)]-beta-D-Man-(1-&gt;4)-beta-D-GlcNAc-(1-&gt;4)-alpha-D-GlcNAc-diphospho-di-trans,poly-cis-dolichol + a di-trans,poly-cis-dolichyl phosphate + H(+). It participates in protein modification; protein glycosylation. In terms of biological role, probable alpha-1,2-mannosyltransferase involved in the N-glycosylation pathway. Probably involved in glycosylation of the TNF receptor grnd, regulating its ligand affinity. Required for normal epithelial growth and architecture. Suppressor of JNK-dependent intestinal stem cell proliferation. The protein is Alpha-1,2-mannosyltransferase Alg9 of Drosophila melanogaster (Fruit fly).